The primary structure comprises 173 residues: Co-chaperone protein HscB homolog (173 aa).

Positions 5-77 (CHFALFELQP…PKRARYLLAM (73 aa)) constitute a J domain.

It belongs to the HscB family. Interacts with HscA and stimulates its ATPase activity.

Its function is as follows. Co-chaperone involved in the maturation of iron-sulfur cluster-containing proteins. Seems to help targeting proteins to be folded toward HscA. This chain is Co-chaperone protein HscB homolog, found in Pseudomonas fluorescens (strain SBW25).